Consider the following 920-residue polypeptide: Ubiquitin ligase-binding protein BUL2 (920 aa).

A compositionally biased stretch (polar residues) spans 1–10 (MTFTFSTSSR). The disordered stretch occupies residues 1–89 (MTFTFSTSSR…EENSLEMDCT (89 aa)). Residue Thr-22 is modified to Phosphothreonine. Over residues 35–57 (QQLSSNSTDNSLHPNSGQTPRAS) the composition is skewed to polar residues. The span at 73 to 82 (DRLRQEREEN) shows a compositional bias: basic and acidic residues. Residues 129–133 (FPPSY) carry the PY-motif motif. Ser-557 is modified (phosphoserine).

The protein belongs to the BUL1 family. In terms of assembly, component of the RSP5-BUL1/2 ubiquitin ligase complex composed of at least RSP5 and BUL1 or BUL2.

It is found in the cytoplasm. Its pathway is protein modification; protein ubiquitination. Functionally, component of a RSP5 ubiquitin ligase complex which specifies polyubiquitination and intracellular trafficking of the general amino acid permease GAP1 as well as other permeases such as PMA1. The RSP5-BUL1/2 complex is also necessary for the heat-shock element (HSE)-mediated gene expression, nitrogen starvation GLN3-dependent transcription and pressure-induced differential regulation of the 2 tryptophan permeases TAT1 and TAT2. The protein is Ubiquitin ligase-binding protein BUL2 (BUL2) of Saccharomyces cerevisiae (strain ATCC 204508 / S288c) (Baker's yeast).